The chain runs to 596 residues: Aspartate--tRNA(Asp/Asn) ligase (596 aa).

Residue E172 participates in L-aspartate binding. Residues 196 to 199 (QLFK) form an aspartate region. R218 lines the L-aspartate pocket. ATP-binding positions include 218 to 220 (RDE) and Q227. H455 lines the L-aspartate pocket. E489 contacts ATP. R496 lines the L-aspartate pocket. 541 to 544 (GLDR) contacts ATP.

Belongs to the class-II aminoacyl-tRNA synthetase family. Type 1 subfamily. In terms of assembly, homodimer.

The protein localises to the cytoplasm. It carries out the reaction tRNA(Asx) + L-aspartate + ATP = L-aspartyl-tRNA(Asx) + AMP + diphosphate. Functionally, aspartyl-tRNA synthetase with relaxed tRNA specificity since it is able to aspartylate not only its cognate tRNA(Asp) but also tRNA(Asn). Reaction proceeds in two steps: L-aspartate is first activated by ATP to form Asp-AMP and then transferred to the acceptor end of tRNA(Asp/Asn). This Bordetella bronchiseptica (strain ATCC BAA-588 / NCTC 13252 / RB50) (Alcaligenes bronchisepticus) protein is Aspartate--tRNA(Asp/Asn) ligase.